A 452-amino-acid polypeptide reads, in one-letter code: Type II methyltransferase M.EcaI (452 aa).

The protein belongs to the N(4)/N(6)-methyltransferase family.

It catalyses the reaction a 2'-deoxyadenosine in DNA + S-adenosyl-L-methionine = an N(6)-methyl-2'-deoxyadenosine in DNA + S-adenosyl-L-homocysteine + H(+). In terms of biological role, a beta subtype methylase, recognizes the double-stranded sequence 5'-GGTNACC-3', methylates A-5 on both strands and protects the DNA from cleavage by the EcaI endonuclease. This chain is Type II methyltransferase M.EcaI (ecaIM), found in Enterobacter cloacae.